The following is a 247-amino-acid chain: UPF0309 protein lin2794 (247 aa).

Positions 31-214 constitute an SIS domain; sequence VAESIENDGV…EKMVNDNFTP (184 aa).

This sequence belongs to the UPF0309 family.

The polypeptide is UPF0309 protein lin2794 (Listeria innocua serovar 6a (strain ATCC BAA-680 / CLIP 11262)).